Consider the following 311-residue polypeptide: N-acetylmuramic acid 6-phosphate etherase (311 aa).

One can recognise an SIS domain in the interval 64–227; it reads IYQRLIDNGR…SSGVMIKLGK (164 aa). Glu-92 functions as the Proton donor in the catalytic mechanism. Residue Glu-123 is part of the active site.

It belongs to the GCKR-like family. MurNAc-6-P etherase subfamily. Homodimer.

The catalysed reaction is N-acetyl-D-muramate 6-phosphate + H2O = N-acetyl-D-glucosamine 6-phosphate + (R)-lactate. The protein operates within amino-sugar metabolism; N-acetylmuramate degradation. In terms of biological role, specifically catalyzes the cleavage of the D-lactyl ether substituent of MurNAc 6-phosphate, producing GlcNAc 6-phosphate and D-lactate. The protein is N-acetylmuramic acid 6-phosphate etherase of Prochlorococcus marinus (strain SARG / CCMP1375 / SS120).